Here is a 160-residue protein sequence, read N- to C-terminus: Large ribosomal subunit protein uL16 (160 aa).

The protein belongs to the universal ribosomal protein uL16 family. Part of the 50S ribosomal subunit.

In terms of biological role, binds 23S rRNA and is also seen to make contacts with the A and possibly P site tRNAs. The sequence is that of Large ribosomal subunit protein uL16 from Prochlorococcus marinus (strain MIT 9301).